The chain runs to 165 residues: MKTSRLPIAIQQAVMRRLREKLAQANLKLGRNYPEPKLSYTQRGTSAGTAWLESYKIRLNPVLLLENSEAFIEEVVPHELAHLLVWKHFGRVAPHGKEWKWMMENVLGVPARRTHQFELQSVRRNTFPYRCKCQEHQLTVRRHNRVVRGEAVYRCVHCGEQLVAK.

The SprT-like domain occupies 20-163 (EKLAQANLKL…RCVHCGEQLV (144 aa)). H78 contributes to the Zn(2+) binding site. E79 is an active-site residue. H82 contacts Zn(2+).

Belongs to the SprT family. Zn(2+) serves as cofactor.

The protein localises to the cytoplasm. The sequence is that of Protein SprT from Shigella boydii serotype 18 (strain CDC 3083-94 / BS512).